The primary structure comprises 499 residues: Dual specificity protein kinase CLK2 (499 aa).

The segment at 1-67 is disordered; it reads MPHPRRYHSS…SYDDRSSDRR (67 aa). The span at 8 to 21 shows a compositional bias: basic and acidic residues; it reads HSSERGSRGSYREH. The segment covering 22-33 has biased composition (basic residues); the sequence is YRSRKHKRRRSR. Position 34 is a phosphoserine; by PKB/AKT1 (Ser-34). A compositionally biased stretch (basic and acidic residues) spans 47-67; it reads REDSYHVRSRSSYDDRSSDRR. At Ser-98 the chain carries Phosphoserine. Tyr-99 is modified (phosphotyrosine; by autocatalysis). The tract at residues 101–143 is disordered; sequence YQRENSSYRSQRSSRRKHRRRRRRSRTFSRSSSQHSSRRAKSV. Over residues 112-127 the composition is skewed to basic residues; the sequence is RSSRRKHRRRRRRSRT. Residue Thr-127 is modified to Phosphothreonine; by PKB/AKT1. Residue Ser-142 is modified to Phosphoserine; by autocatalysis. Phosphotyrosine is present on Tyr-153. Residues 163–479 form the Protein kinase domain; that stretch reads YEIVSTLGEG…LGEALQHPFF (317 aa). ATP is bound by residues 169-177 and Lys-193; that span reads LGEGTFGRV. Asp-290 serves as the catalytic Proton acceptor. Position 344 is a phosphothreonine; by PKB/AKT2 (Thr-344).

This sequence belongs to the protein kinase superfamily. CMGC Ser/Thr protein kinase family. Lammer subfamily. As to quaternary structure, interacts with RBMX. Interacts with AKT1 and UBL5. Post-translationally, autophosphorylates on all three types of residues. Phosphorylation on Ser-34 and Thr-127 by AKT1 is induced by ionizing radiation or insulin. Phosphorylation plays a critical role in cell proliferation following low dose radiation and prevents cell death following high dose radiation. Phosphorylation at Thr-344 by PKB/AKT2 induces its kinase activity which is required for its stability. The phosphorylation status at Ser-142 influences its subnuclear localization; inhibition of phosphorylation at Ser-142 results in accumulation in the nuclear speckle. Endothelial cells. Expressed in androgen-dependent prostate cancer cells.

It is found in the nucleus. The protein resides in the nucleus speckle. The enzyme catalyses L-seryl-[protein] + ATP = O-phospho-L-seryl-[protein] + ADP + H(+). It catalyses the reaction L-threonyl-[protein] + ATP = O-phospho-L-threonyl-[protein] + ADP + H(+). The catalysed reaction is L-tyrosyl-[protein] + ATP = O-phospho-L-tyrosyl-[protein] + ADP + H(+). 5,6-dichloro-1-b-D-ribofuranosylbenzimidazole (DRB) inhibits autophosphorylation. TG003 inhibits its kinase activity and affects the regulation of alternative splicing mediated by phosphorylation of SR proteins. Dual specificity kinase acting on both serine/threonine and tyrosine-containing substrates. Phosphorylates serine- and arginine-rich (SR) proteins of the spliceosomal complex. May be a constituent of a network of regulatory mechanisms that enable SR proteins to control RNA splicing and can cause redistribution of SR proteins from speckles to a diffuse nucleoplasmic distribution. Acts as a suppressor of hepatic gluconeogenesis and glucose output by repressing PPARGC1A transcriptional activity on gluconeogenic genes via its phosphorylation. Phosphorylates PPP2R5B thereby stimulating the assembly of PP2A phosphatase with the PPP2R5B-AKT1 complex leading to dephosphorylation of AKT1. Phosphorylates: PTPN1, SRSF1 and SRSF3. Regulates the alternative splicing of tissue factor (F3) pre-mRNA in endothelial cells. Phosphorylates PAGE4 at several serine and threonine residues and this phosphorylation attenuates the ability of PAGE4 to potentiate the transcriptional activator activity of JUN. The polypeptide is Dual specificity protein kinase CLK2 (CLK2) (Homo sapiens (Human)).